The following is a 78-amino-acid chain: Myrmicitoxin-Ta2a (78 aa).

The first 26 residues, 1–26, serve as a signal peptide directing secretion; that stretch reads MKLSFLSLALAIIFVTVLIYAPQAEA. The propeptide occupies 27–56; sequence KALADAVADADADADAAADAVADALADADA. The residue at position 77 (Lys-77) is a Lysine amide.

Belongs to the formicidae venom precursor-01 superfamily. As to expression, expressed by the venom gland.

It localises to the secreted. Peptide with toxicity towards insects that may also act as antimicrobial peptide. Causes calcium influx in F11 cells (EC(50)=5.8 nM), possibly by modulating sodium channels (Nav). In vivo, is lethal to insects, but does not show toxicity to vertebrates. Intraplantar injection into mice does not induce spontaneous nocifensive behaviors up to a dose of 200 pmol. In Tetramorium africanum (Fierce ant), this protein is Myrmicitoxin-Ta2a.